Reading from the N-terminus, the 126-residue chain is Fluoride-specific ion channel FluC 1 (126 aa).

4 helical membrane passes run 1-21 (MAGS…GAWL), 38-58 (WGTF…LALY), 67-87 (LALL…TFAV), and 99-119 (FVSL…AGVG). The Na(+) site is built by Gly-77 and Ser-80.

Belongs to the fluoride channel Fluc/FEX (TC 1.A.43) family.

Its subcellular location is the cell inner membrane. It catalyses the reaction fluoride(in) = fluoride(out). With respect to regulation, na(+) is not transported, but it plays an essential structural role and its presence is essential for fluoride channel function. Fluoride-specific ion channel. Important for reducing fluoride concentration in the cell, thus reducing its toxicity. The polypeptide is Fluoride-specific ion channel FluC 1 (Synechococcus sp. (strain CC9902)).